The following is a 443-amino-acid chain: MQTQNAPETAENQQTDSELGRHLLTARGFHWIYGTSGDPYALTLRAESDDPALLTRRIREAGTPLWQSTTGAWVTGRHGVAAEALADPRLALRHADLPGPQRHVFSDAWSNPQLCHIIPLDRAFLHASDADHTRWARSASAVLGSAGGAPAEGVREHAGRVHREAADRTGDSFDLMADYSRPVATEAAAELLGVPAAQRERFAATCLALGVALDAALCPQPLAVTRRLTEAVEDVRALVGDLVEARRTQPGDDLLSAVLHAGSSAASAGQDALAVGVLTAVVGVEVTAGLINNTLESLLTRPVQWARLGENPELAAGAVEEALRFAPPVRLESRIAAEDLTLGGQDLPAGAQVVVHVGAANRDPEAFLAPDHFDLDRPAGQGQLSLSGPHTALFGAFARLQAETAVRTLRERRPVLAPAGAVLRRMRSPVLGAVLRFPLTTSA.

It belongs to the cytochrome P450 family.

Functionally, involved in the biosynthesis of the anthracycline antitumor agent aclacinomycin A. AknT is required for the glycosylation of aklavinone aglycone by AknS to yield aclacinomycin T (rhodosaminyl-aklavinone). This is Protein AknT from Streptomyces galilaeus.